The primary structure comprises 411 residues: Imidazolonepropionase (411 aa).

The Fe(3+) site is built by His78 and His80. The Zn(2+) site is built by His78 and His80. Positions 87, 150, and 183 each coordinate 4-imidazolone-5-propanoate. Tyr150 lines the N-formimidoyl-L-glutamate pocket. Residue His248 coordinates Fe(3+). A Zn(2+)-binding site is contributed by His248. Gln251 contacts 4-imidazolone-5-propanoate. Residue Asp322 participates in Fe(3+) binding. Asp322 is a binding site for Zn(2+). Residues Asn324 and Gly326 each coordinate N-formimidoyl-L-glutamate. 4-imidazolone-5-propanoate is bound at residue Thr327.

It belongs to the metallo-dependent hydrolases superfamily. HutI family. It depends on Zn(2+) as a cofactor. The cofactor is Fe(3+).

It localises to the cytoplasm. It catalyses the reaction 4-imidazolone-5-propanoate + H2O = N-formimidoyl-L-glutamate. It participates in amino-acid degradation; L-histidine degradation into L-glutamate; N-formimidoyl-L-glutamate from L-histidine: step 3/3. Catalyzes the hydrolytic cleavage of the carbon-nitrogen bond in imidazolone-5-propanoate to yield N-formimidoyl-L-glutamate. It is the third step in the universal histidine degradation pathway. In Flavobacterium psychrophilum (strain ATCC 49511 / DSM 21280 / CIP 103535 / JIP02/86), this protein is Imidazolonepropionase.